Reading from the N-terminus, the 1483-residue chain is Dynein axonemal assembly factor 1 homolog (1483 aa).

LRR repeat units follow at residues 34-56 (RLNDVLYLHYQGFQCIESLEEYT), 57-78 (ELKCLWLECNAISEIQGLEKLS), 79-100 (KLKCLFLQNNLITKIENLDPCR), 101-122 (ELDTLNLSSNHIRKIQNIGTNV), 125-146 (VLNTLTISSNYLKDSESLSDLI), and 150-171 (TLSVLDLSNNRIDDILIVKIFE). An LRRCT domain is found at 185-223 (PVVSRLPQYRKTLILACKELTYLDSRPVFPRDRACAEAW). 4 disordered regions span residues 249–282 (SINCTIRMRNSHRPPDQQDPLLRSSDSEDDTCAE), 300–327 (EEVSGEQPISEDGTNSSSSLEDNDGTSS), 945–986 (DSGD…HGTK), and 1167–1213 (SENE…SIDD). A compositionally biased stretch (polar residues) spans 311-327 (DGTNSSSSLEDNDGTSS). Over residues 1183-1196 (TNDKESSDIMEKNG) the composition is skewed to basic and acidic residues.

Belongs to the DNAAF1 family.

The protein localises to the cell projection. It localises to the cilium. Cilium-specific protein required for cilia structures. This is Dynein axonemal assembly factor 1 homolog (dtr) from Drosophila melanogaster (Fruit fly).